Reading from the N-terminus, the 201-residue chain is LexA repressor (201 aa).

Residues 29 to 49 (VREICKAVGLSSTSSVHFHLK) constitute a DNA-binding region (H-T-H motif). Catalysis depends on for autocatalytic cleavage activity residues serine 125 and lysine 162.

The protein belongs to the peptidase S24 family. In terms of assembly, homodimer.

The enzyme catalyses Hydrolysis of Ala-|-Gly bond in repressor LexA.. Represses a number of genes involved in the response to DNA damage (SOS response), including recA and lexA. In the presence of single-stranded DNA, RecA interacts with LexA causing an autocatalytic cleavage which disrupts the DNA-binding part of LexA, leading to derepression of the SOS regulon and eventually DNA repair. The polypeptide is LexA repressor (Clostridium botulinum (strain 657 / Type Ba4)).